The following is a 98-amino-acid chain: NADH-ubiquinone oxidoreductase chain 4L (98 aa).

The next 3 membrane-spanning stretches (helical) occupy residues 1–21 (MTSI…GVLV), 28–48 (STLL…ALLI), and 59–79 (APLI…ALLV).

This sequence belongs to the complex I subunit 4L family. Core subunit of respiratory chain NADH dehydrogenase (Complex I) which is composed of 45 different subunits.

It localises to the mitochondrion inner membrane. It carries out the reaction a ubiquinone + NADH + 5 H(+)(in) = a ubiquinol + NAD(+) + 4 H(+)(out). In terms of biological role, core subunit of the mitochondrial membrane respiratory chain NADH dehydrogenase (Complex I) which catalyzes electron transfer from NADH through the respiratory chain, using ubiquinone as an electron acceptor. Part of the enzyme membrane arm which is embedded in the lipid bilayer and involved in proton translocation. In Dactylopsila trivirgata (Striped possum), this protein is NADH-ubiquinone oxidoreductase chain 4L (MT-ND4L).